Here is a 401-residue protein sequence, read N- to C-terminus: Phosrestin-1 (401 aa).

The protein belongs to the arrestin family. In terms of tissue distribution, inner and outer segments, and the inner plexiform regions of the retina.

Undergoes light-induced phosphorylation, probably plays an important role in the photoreceptor transduction. This chain is Phosrestin-1 (Arr2), found in Drosophila miranda (Fruit fly).